Here is a 306-residue protein sequence, read N- to C-terminus: Porphobilinogen deaminase (306 aa).

Residue Cys241 is modified to S-(dipyrrolylmethanemethyl)cysteine.

It belongs to the HMBS family. In terms of assembly, monomer. Dipyrromethane serves as cofactor.

The enzyme catalyses 4 porphobilinogen + H2O = hydroxymethylbilane + 4 NH4(+). The protein operates within porphyrin-containing compound metabolism; protoporphyrin-IX biosynthesis; coproporphyrinogen-III from 5-aminolevulinate: step 2/4. Its function is as follows. Tetrapolymerization of the monopyrrole PBG into the hydroxymethylbilane pre-uroporphyrinogen in several discrete steps. The sequence is that of Porphobilinogen deaminase from Acidithiobacillus ferrooxidans (strain ATCC 23270 / DSM 14882 / CIP 104768 / NCIMB 8455) (Ferrobacillus ferrooxidans (strain ATCC 23270)).